The primary structure comprises 565 residues: Periplasmic trehalase (565 aa).

A signal peptide spans 1–30 (MKSPAPSRPQKMALIPACIFLCFAALSVQA). Residues arginine 152, 159–160 (WD), asparagine 196, 205–207 (RSQ), 277–279 (RPE), and glycine 310 each bind substrate. Catalysis depends on proton donor/acceptor residues aspartate 312 and glutamate 496. Residue glutamate 511 coordinates substrate. A disordered region spans residues 538–565 (PCDNVPATRPTVKSATTQPSTKEAQPTP). Polar residues predominate over residues 548 to 565 (TVKSATTQPSTKEAQPTP).

Belongs to the glycosyl hydrolase 37 family. As to quaternary structure, monomer.

The protein resides in the periplasm. The enzyme catalyses alpha,alpha-trehalose + H2O = alpha-D-glucose + beta-D-glucose. In terms of biological role, provides the cells with the ability to utilize trehalose at high osmolarity by splitting it into glucose molecules that can subsequently be taken up by the phosphotransferase-mediated uptake system. In Escherichia coli O8 (strain IAI1), this protein is Periplasmic trehalase.